The sequence spans 296 residues: Nucleotide-binding protein Spy49_0545 (296 aa).

Position 13-20 (13-20 (GMSGAGKT)) interacts with ATP. 63-66 (DMRS) serves as a coordination point for GTP.

This sequence belongs to the RapZ-like family.

In terms of biological role, displays ATPase and GTPase activities. This Streptococcus pyogenes serotype M49 (strain NZ131) protein is Nucleotide-binding protein Spy49_0545.